We begin with the raw amino-acid sequence, 323 residues long: 4-hydroxythreonine-4-phosphate dehydrogenase (323 aa).

A substrate-binding site is contributed by threonine 133. A divalent metal cation contacts are provided by histidine 161, histidine 206, and histidine 261. The substrate site is built by lysine 269, asparagine 278, and arginine 287.

This sequence belongs to the PdxA family. In terms of assembly, homodimer. Zn(2+) serves as cofactor. Requires Mg(2+) as cofactor. It depends on Co(2+) as a cofactor.

Its subcellular location is the cytoplasm. It carries out the reaction 4-(phosphooxy)-L-threonine + NAD(+) = 3-amino-2-oxopropyl phosphate + CO2 + NADH. It participates in cofactor biosynthesis; pyridoxine 5'-phosphate biosynthesis; pyridoxine 5'-phosphate from D-erythrose 4-phosphate: step 4/5. Catalyzes the NAD(P)-dependent oxidation of 4-(phosphooxy)-L-threonine (HTP) into 2-amino-3-oxo-4-(phosphooxy)butyric acid which spontaneously decarboxylates to form 3-amino-2-oxopropyl phosphate (AHAP). This chain is 4-hydroxythreonine-4-phosphate dehydrogenase, found in Xanthomonas axonopodis pv. citri (strain 306).